Reading from the N-terminus, the 153-residue chain is Bkd operon transcriptional regulator (153 aa).

The HTH asnC-type domain occupies 4–65 (LDRIDLKILR…RLDEERLSGA (62 aa)). Residues 23–42 (WRDLAQKVGLSLTPTLRRVR) constitute a DNA-binding region (H-T-H motif).

In terms of biological role, positive regulator of the bkd operon for branched-chain keto acid dehydrogenase complex. In Pseudomonas aeruginosa (strain ATCC 15692 / DSM 22644 / CIP 104116 / JCM 14847 / LMG 12228 / 1C / PRS 101 / PAO1), this protein is Bkd operon transcriptional regulator (bkdR).